We begin with the raw amino-acid sequence, 204 residues long: Ribonuclease HII (204 aa).

Residues 1-197 enclose the RNase H type-2 domain; it reads MILGIDEAGR…KNRILNPKLL (197 aa). 3 residues coordinate a divalent metal cation: Asp-6, Glu-7, and Asp-103.

It belongs to the RNase HII family. The cofactor is Mn(2+). Mg(2+) serves as cofactor.

It localises to the cytoplasm. The catalysed reaction is Endonucleolytic cleavage to 5'-phosphomonoester.. Its function is as follows. Endonuclease that specifically degrades the RNA of RNA-DNA hybrids. This Helicobacter pylori (strain G27) protein is Ribonuclease HII.